The chain runs to 683 residues: Methionine--tRNA ligase (683 aa).

A 'HIGH' region motif is present at residues 14–24 (PYANGSIHLGH). Zn(2+)-binding residues include Cys145, Cys148, Cys158, and Cys161. The short motif at 331–335 (KMSKS) is the 'KMSKS' region element. ATP is bound at residue Lys334. The 103-residue stretch at 581-683 (AFAAVDLRVA…SGAKPGQRIK (103 aa)) folds into the tRNA-binding domain.

The protein belongs to the class-I aminoacyl-tRNA synthetase family. MetG type 1 subfamily. As to quaternary structure, homodimer. It depends on Zn(2+) as a cofactor.

The protein resides in the cytoplasm. The catalysed reaction is tRNA(Met) + L-methionine + ATP = L-methionyl-tRNA(Met) + AMP + diphosphate. Functionally, is required not only for elongation of protein synthesis but also for the initiation of all mRNA translation through initiator tRNA(fMet) aminoacylation. The chain is Methionine--tRNA ligase from Pseudomonas fluorescens (strain SBW25).